A 530-amino-acid polypeptide reads, in one-letter code: Arginine--tRNA ligase (530 aa).

The short motif at alanine 113–histidine 123 is the 'HIGH' region element.

The protein belongs to the class-I aminoacyl-tRNA synthetase family. As to quaternary structure, monomer.

It is found in the cytoplasm. The catalysed reaction is tRNA(Arg) + L-arginine + ATP = L-arginyl-tRNA(Arg) + AMP + diphosphate. The sequence is that of Arginine--tRNA ligase from Campylobacter jejuni (strain RM1221).